Here is a 64-residue protein sequence, read N- to C-terminus: Transcription factor P13 (64 aa).

In terms of biological role, transcription factor that regulates expression of phage structural components with protein P14. This is Transcription factor P13 from Pseudoalteromonas phage PM2 (Bacteriophage PM2).